Here is a 190-residue protein sequence, read N- to C-terminus: Peptide deformylase (190 aa).

The Fe cation site is built by Cys-94 and His-136. Glu-137 is a catalytic residue. A Fe cation-binding site is contributed by His-140.

It belongs to the polypeptide deformylase family. Fe(2+) is required as a cofactor.

The enzyme catalyses N-terminal N-formyl-L-methionyl-[peptide] + H2O = N-terminal L-methionyl-[peptide] + formate. In terms of biological role, removes the formyl group from the N-terminal Met of newly synthesized proteins. Requires at least a dipeptide for an efficient rate of reaction. N-terminal L-methionine is a prerequisite for activity but the enzyme has broad specificity at other positions. The chain is Peptide deformylase from Chlorobium luteolum (strain DSM 273 / BCRC 81028 / 2530) (Pelodictyon luteolum).